Consider the following 365-residue polypeptide: Aminotransferase poxL (365 aa).

Residue Arg-92 participates in pyridoxal 5'-phosphate binding. The residue at position 193 (Lys-193) is an N6-(pyridoxal phosphate)lysine. A pyridoxal 5'-phosphate-binding site is contributed by Glu-229.

Belongs to the class-IV pyridoxal-phosphate-dependent aminotransferase family. The cofactor is pyridoxal 5'-phosphate.

It functions in the pathway secondary metabolite biosynthesis. Its function is as follows. Aminotransferase; part of the gene cluster that mediates the biosynthesis of oxaleimides, cytotoxic compounds containing an unusual disubstituted succinimide moiety. The first step of the pathway is provided by the HR-PKS poxF that serves in a new mode of collaborative biosynthesis with the PKS-NRPS poxE, by providing the olefin containing amino acid substrate via the synthesis of an ACP-bound dec-4-enoate. The cytochrome P450 monooxygenase poxM-catalyzed oxidation at the alpha-position creates the enzyme-bound 2-hydroxydec-4-enoyl-ACP thioester, which may be prone to spontaneous hydrolysis to yield 2-hydroxydec-4-enoic acid due to increased electrophilicity of the carbonyl. 2-hydroxydec-4-enoic acid can then be further oxidized by poxM to yield the alpha-ketoacid 2-oxodec-4-enoicacid, which is reductively aminated by the aminotransferase poxL to yield (S,E)-2-aminodec-4-enoic acid. The Hybrid PKS-NRPS synthetase poxE then performs condensation between the octaketide product of its PKS modules and the amino group of (S,E)-2-aminodec-4-enoic acid which is activated and incorporated by the adenylation domain. The resulting aminoacyl product can be cyclized by the Diels-Alderase PoxQ and reductively released by the reductive (R) domain of poxE to yield an aldehyde intermediate. The released aldehyde is then substrate for a Knoevenagel condensation by the hydrolyase poxO followed by an oxidation at the 5-position of the pyrrolidone ring. The presence of the olefin from the amino acid building block allows for migration of the substituted allyl group to occur. This allylic transposition reaction takes place in a conjugate addition, semipinacol-like fashion to yield a succinimide intermediate. Iterative two-electron oxidations of the C7 methyl of the succinimide intermediate to the carboxylic acid can be catalyzed by one of two remaining cytochrome P450 monooxygenasess poxC or poxD to yield oxaleimide A. Subsequent oxidation yields the maleimide scaffold oxaleimide I. Both oxaleimide A and oxaleimide I can undergo oxidative modifications in the decalin ring to yield the series of products oxaleimides B to H. This Penicillium oxalicum protein is Aminotransferase poxL.